The following is a 608-amino-acid chain: UvrABC system protein C (608 aa).

In terms of domain architecture, GIY-YIG spans 13–91 (HDPGVYRMFD…IKTFQPRYNV (79 aa)). In terms of domain architecture, UVR spans 201–236 (QQVLDHLIAKMETASRALDFENAARFRDQIQAVRAV).

Belongs to the UvrC family. As to quaternary structure, interacts with UvrB in an incision complex.

Its subcellular location is the cytoplasm. The UvrABC repair system catalyzes the recognition and processing of DNA lesions. UvrC both incises the 5' and 3' sides of the lesion. The N-terminal half is responsible for the 3' incision and the C-terminal half is responsible for the 5' incision. The chain is UvrABC system protein C from Actinobacillus succinogenes (strain ATCC 55618 / DSM 22257 / CCUG 43843 / 130Z).